We begin with the raw amino-acid sequence, 88 residues long: DNA-directed RNA polymerase subunit omega (88 aa).

The protein belongs to the RNA polymerase subunit omega family. In terms of assembly, the RNAP catalytic core consists of 2 alpha, 1 beta, 1 beta' and 1 omega subunit. When a sigma factor is associated with the core the holoenzyme is formed, which can initiate transcription.

The catalysed reaction is RNA(n) + a ribonucleoside 5'-triphosphate = RNA(n+1) + diphosphate. In terms of biological role, promotes RNA polymerase assembly. Latches the N- and C-terminal regions of the beta' subunit thereby facilitating its interaction with the beta and alpha subunits. The chain is DNA-directed RNA polymerase subunit omega from Haemophilus influenzae (strain PittEE).